Here is a 449-residue protein sequence, read N- to C-terminus: MSPESKKLFNIIILGVAFMFMFTAFQTCGNVAQTVIRSLNSTDFHGSGYTSMAIIYGVFSASNLITPPVVAIVGPQLSMFASGLFYSMYIAVFNQPFPWSFYTASVFIGIAAAVLWTAQGNCLTINSDEHTIGRNSGIFWALLQSSLFFGNLYVYFAWQGKTQISESDRRTVFIALTVISLVGTVLFFLIRKPDSENVLGEDESSDDQDMEVNESAQNNLTKAVDAFKKSFKLCVTKEMLLLSITTAYTGLELTFFSGVYGTCIGAINKFGAEEKSLIGLSGIFIGIGEILGGSLFGLLSKNNRFGRNPVVLLGILVHFIAFYLIFLNMPGDAPIAPVKGTDSSAYIKSSKEVAILCSFLLGLGDSCFNTQLLSILGFLYSEDSAPAFAIFKFVQSICAAVAFFYSNYLLLHWQLLVMVIFGFFGTLSFFTVEWEAAAFVARGSDYRSI.

Residues 8–28 (LFNIIILGVAFMFMFTAFQTC) traverse the membrane as a helical segment. The N-linked (GlcNAc...) asparagine glycan is linked to Asn40. Transmembrane regions (helical) follow at residues 53–73 (AIIY…VAIV), 74–94 (GPQL…AVFN), 96–116 (PFPW…AVLW), 138–158 (IFWA…YFAW), and 170–190 (RTVF…FFLI). Ser204 is subject to Phosphoserine. The next 6 helical transmembrane spans lie at 239–259 (MLLL…FSGV), 277–297 (LIGL…SLFG), 309–329 (PVVL…FLNM), 359–379 (FLLG…LGFL), 385–405 (APAF…AFFY), and 410–430 (LLHW…LSFF).

The protein belongs to the unc-93 family.

The protein resides in the membrane. The polypeptide is UNC93-like protein MFSD11 (MFSD11) (Pongo abelii (Sumatran orangutan)).